A 107-amino-acid chain; its full sequence is uncharacterized protein (107 aa).

The helical transmembrane segment at 37-59 (MVFSFLTVMPGDFIKCLFLRFFV) threads the bilayer.

Its subcellular location is the membrane. This is an uncharacterized protein from Saccharomyces cerevisiae (strain ATCC 204508 / S288c) (Baker's yeast).